The chain runs to 503 residues: Cytosolic carboxypeptidase 6 (503 aa).

One can recognise a Peptidase M14 domain in the interval 167 to 438 (YPYTYTRFQH…NVARTFLDYY (272 aa)). Residues His-230, Glu-233, and His-328 each contribute to the Zn(2+) site. The Proton donor/acceptor role is filled by Glu-401. 2 stretches are compositionally biased toward basic and acidic residues: residues 459-469 (IEVQRRKEKSP) and 487-503 (KGDKKSSVNHKDPSTPF). Positions 459-503 (IEVQRRKEKSPPYKHPLLRGPASNYPNSKGDKKSSVNHKDPSTPF) are disordered.

Belongs to the peptidase M14 family. In terms of assembly, interacts with MYLK. Zn(2+) is required as a cofactor.

The protein resides in the cytoplasm. Its subcellular location is the cytosol. The protein localises to the cytoskeleton. It is found in the microtubule organizing center. It localises to the centrosome. The protein resides in the centriole. Its subcellular location is the golgi apparatus. The protein localises to the cilium basal body. It catalyses the reaction (L-glutamyl)(n+1)-gamma-L-glutamyl-L-glutamyl-[protein] + H2O = (L-glutamyl)(n)-gamma-L-glutamyl-L-glutamyl-[protein] + L-glutamate. The catalysed reaction is C-terminal L-alpha-aminoacyl-L-glutamyl-L-glutamyl-[tubulin] + H2O = C-terminal L-alpha-aminoacyl-L-glutamyl-[tubulin] + L-glutamate. Functionally, metallocarboxypeptidase that mediates protein deglutamylation of tubulin and non-tubulin target proteins. Catalyzes the removal of polyglutamate side chains present on the gamma-carboxyl group of glutamate residues within the C-terminal tail of tubulin protein. Specifically cleaves tubulin long-side-chains, while it is not able to remove the branching point glutamate. Also catalyzes the removal of polyglutamate residues from the carboxy-terminus of non-tubulin proteins such as MYLK. Mediates the deglutamylation of nucleotidyltransferase CGAS, leading to CGAS antiviral defense response activation. Involved in KLF4 deglutamylation which promotes KLF4 proteasome-mediated degradation, thereby negatively regulating cell pluripotency maintenance and embryogenesis. The polypeptide is Cytosolic carboxypeptidase 6 (Homo sapiens (Human)).